The primary structure comprises 713 residues: G-protein coupled receptor-associated protein LMBRD2 (713 aa).

Residues 1-3 (MSG) are Extracellular-facing. The helical transmembrane segment at 4 to 21 (VALGIEIVSVFFLALFLL) threads the bilayer. Topologically, residues 22-32 (HRYGDFKKQHK) are cytoplasmic. A helical transmembrane segment spans residues 33–53 (LVIVGTLLAWYLCFLIVFIIP). At 54 to 122 (LDVSTTIYNR…SKPWSYIPRG (69 aa)) the chain is on the extracellular side. Residues Asn-76 and Asn-89 are each glycosylated (N-linked (GlcNAc...) asparagine). A helical transmembrane segment spans residues 123–143 (IMPIFWRVVYWTSQFLTWILM). Topologically, residues 144 to 167 (PFMQSYARSGGFSITGKIKTALIE) are cytoplasmic. The helical transmembrane segment at 168–188 (NAIYYGTYLLIFGALLIYVAV) threads the bilayer. The Extracellular portion of the chain corresponds to 189-203 (NPNLHLEWYQLQTIG). A helical transmembrane segment spans residues 204–224 (IAAANTWGLFLLVLLMGYGLV). Residues 225-404 (EIPRSQWNGA…ECLLRPWCSR (180 aa)) lie on the Cytoplasmic side of the membrane. Residues 246–314 (KAAKLMTEKA…DDYEDFEEKN (69 aa)) adopt a coiled-coil conformation. The helical transmembrane segment at 405-425 (ILAVILALFSTVVVWSECTFF) threads the bilayer. At 426–449 (SAKPVLSLFAVFIQQAEQTHNYIY) the chain is on the extracellular side. Residues 450–470 (VEVVCFLSIFFLSICVYSTVF) traverse the membrane as a helical segment. Residues 471–490 (RIRVFNYYYLASHHQTDAYS) are Cytoplasmic-facing. A helical transmembrane segment spans residues 491–511 (LLFSGMLFCRLTPPLCLNFLG). Residues 512 to 538 (LTHMDVSISHQNIEPTAYTSIMGSLRV) are Extracellular-facing. A helical transmembrane segment spans residues 539–559 (LPLIADVFYIYYPMLVLILCI). The Cytoplasmic portion of the chain corresponds to 560–713 (ATYFSLGTRC…QSNSRIFDDV (154 aa)). A coiled-coil region spans residues 587–620 (DLTDEGKELIKREKRKRQRLEDGETRRREWKERY). The disordered stretch occupies residues 600–713 (KRKRQRLEDG…QSNSRIFDDV (114 aa)). Basic and acidic residues predominate over residues 605–629 (RLEDGETRRREWKERYPTNREDTSR). Positions 643–657 (TEMTTNRSSKYTRAS) are enriched in polar residues. Positions 658 to 667 (NRTERDRIEL) are enriched in basic and acidic residues. Polar residues predominate over residues 701–713 (SMSQSNSRIFDDV).

The protein belongs to the LIMR family.

The protein resides in the cell membrane. In terms of biological role, may associate with G-protein coupled receptors and regulate downstream signaling pathways. In Xenopus laevis (African clawed frog), this protein is G-protein coupled receptor-associated protein LMBRD2 (lmbrd2).